A 531-amino-acid polypeptide reads, in one-letter code: NADH-quinone oxidoreductase subunit N (531 aa).

A run of 14 helical transmembrane segments spans residues 8-28, 41-61, 81-101, 146-166, 172-192, 208-228, 250-270, 282-302, 318-338, 350-370, 372-392, 418-438, 453-473, and 500-520; these read VEYF…AGVL, AQVT…IVVA, ATLF…VFMA, GATQ…MMVF, LLTM…MCGL, FLLG…LYGA, ALAG…AVPF, PTPI…GALL, PVLW…AVNQ, VAHV…GLSA, LFYL…VGLV, IVGV…LTSG, GAVP…YFYV, and AAIA…QPVL.

This sequence belongs to the complex I subunit 2 family. As to quaternary structure, NDH-1 is composed of 14 different subunits. Subunits NuoA, H, J, K, L, M, N constitute the membrane sector of the complex.

It localises to the cell membrane. The catalysed reaction is a quinone + NADH + 5 H(+)(in) = a quinol + NAD(+) + 4 H(+)(out). In terms of biological role, NDH-1 shuttles electrons from NADH, via FMN and iron-sulfur (Fe-S) centers, to quinones in the respiratory chain. The immediate electron acceptor for the enzyme in this species is believed to be a menaquinone. Couples the redox reaction to proton translocation (for every two electrons transferred, four hydrogen ions are translocated across the cytoplasmic membrane), and thus conserves the redox energy in a proton gradient. This chain is NADH-quinone oxidoreductase subunit N, found in Mycobacterium bovis (strain ATCC BAA-935 / AF2122/97).